The chain runs to 510 residues: Probable allantoinase 2 (510 aa).

Zn(2+)-binding residues include H97, H99, K185, H228, H287, and D360. K185 carries the N6-carboxylysine modification.

Belongs to the metallo-dependent hydrolases superfamily. Allantoinase family. Homotetramer. Zn(2+) serves as cofactor. Post-translationally, carboxylation allows a single lysine to coordinate two zinc ions.

The catalysed reaction is (S)-allantoin + H2O = allantoate + H(+). It participates in nitrogen metabolism; (S)-allantoin degradation; allantoate from (S)-allantoin: step 1/1. This is Probable allantoinase 2 (allB2) from Dictyostelium discoideum (Social amoeba).